A 513-amino-acid chain; its full sequence is Na(+)/H(+) antiporter NhaB (513 aa).

A run of 12 helical transmembrane segments spans residues 23 to 43 (LALIIFLIVNPLIFLISPFVA), 52 to 72 (IFTLAMALKCYPLLPGGLLAI), 97 to 117 (LLLMFMVAGIYFMKQLLLFIF), 120 to 140 (LLLSIRSKMLLSLSFCVAAAF), 144 to 164 (FLDALTVVAVVISVAVGFYGI), 202 to 222 (LMMHAGVGTALGGVMTMVGEP), 238 to 258 (FFLRMSPVTVPVLICGLLTCL), 303 to 323 (AIIGVWLVTALALHLAEVGLI), 348 to 368 (TESLPFTALLTVFFSVVAVII), 391 to 411 (LFYIFNGLLSSISDNVFVGTI), 447 to 467 (ATPNGQAAFLFLLTSALAPLI), and 475 to 495 (VWMALPYTLVLTLVGLLCVEF).

The protein belongs to the NhaB Na(+)/H(+) (TC 2.A.34) antiporter family.

The protein resides in the cell inner membrane. It catalyses the reaction 2 Na(+)(in) + 3 H(+)(out) = 2 Na(+)(out) + 3 H(+)(in). Its function is as follows. Na(+)/H(+) antiporter that extrudes sodium in exchange for external protons. The sequence is that of Na(+)/H(+) antiporter NhaB from Escherichia coli (strain 55989 / EAEC).